The sequence spans 928 residues: Protein Niban 1 (928 aa).

Gly2 carries the N-myristoyl glycine lipid modification. A phosphoserine mark is found at Ser579, Ser582, Ser596, Ser602, and Ser646. The segment covering 580–596 (VSSLTDLKPPTGSNQAS) has biased composition (polar residues). Residues 580–600 (VSSLTDLKPPTGSNQASPARR) are disordered. Disordered stretches follow at residues 618–654 (VFQESEEEKQPEVPSSLAKGESLSLPGPSPPPDGTEQ) and 669–707 (ATEDTAGLPGTCSSELEFGGTLEDEEPAQEEPEPITASG). Residues 690 to 701 (LEDEEPAQEEPE) are compositionally biased toward acidic residues. Ser708 carries the post-translational modification Phosphoserine. 2 disordered regions span residues 723-877 (PVDS…ATAS) and 899-928 (PNPDVLLSHKDDVKEGEGGQESFPELPSEE). Low complexity predominate over residues 801-818 (GGLTEEPLGPMEGELPGE). Over residues 825–834 (HEGRGGKCTE) the composition is skewed to basic and acidic residues. The segment covering 865 to 877 (MGGQSSAAQATAS) has biased composition (low complexity). The span at 905–915 (LSHKDDVKEGE) shows a compositional bias: basic and acidic residues. Position 926 is a phosphoserine (Ser926).

The protein belongs to the Niban family. As to expression, expressed in various types of thyroid tumor such as papillary thyroid carcinomas and oxyphilic thyroid tumors but not in normal thyroid tissue (at protein level). Strongly expressed in heart, skeletal muscle, pancreas, white blood cells and prostate with moderate expression in colon and spleen. Expressed in renal carcinoma cells but not in normal kidney.

Its subcellular location is the cytoplasm. It localises to the membrane. Functionally, regulates phosphorylation of a number of proteins involved in translation regulation including EIF2A, EIF4EBP1 and RPS6KB1. May be involved in the endoplasmic reticulum stress response. This is Protein Niban 1 from Homo sapiens (Human).